Consider the following 171-residue polypeptide: PIDD1 alternative open reading frame protein (171 aa).

2 disordered regions span residues 1-22 and 76-156; these read MSGL…RAGG and ILAS…LCPA. Over residues 84 to 99 the composition is skewed to low complexity; sequence GPSAAGGHPGPAASEP.

Interacts with calpain-2 catalytic subunit CAPN2. Cleaved in vitro following UV irradiation to induce caspase-mediated apoptosis and this cleavage is inhibited by a broad-spectrum caspase inhibitor.

It localises to the cytoplasm. It is found in the cytoskeleton. In Homo sapiens (Human), this protein is PIDD1 alternative open reading frame protein.